The sequence spans 141 residues: ATP synthase epsilon chain (141 aa).

This sequence belongs to the ATPase epsilon chain family. As to quaternary structure, F-type ATPases have 2 components, CF(1) - the catalytic core - and CF(0) - the membrane proton channel. CF(1) has five subunits: alpha(3), beta(3), gamma(1), delta(1), epsilon(1). CF(0) has three main subunits: a, b and c.

Its subcellular location is the cell inner membrane. Functionally, produces ATP from ADP in the presence of a proton gradient across the membrane. The polypeptide is ATP synthase epsilon chain (Teredinibacter turnerae (strain ATCC 39867 / T7901)).